Reading from the N-terminus, the 357-residue chain is Chorismate synthase (357 aa).

NADP(+) is bound at residue Arg47. FMN-binding positions include 123-125 (RAS), Gly281, 296-300 (KPTSS), and Arg324.

Belongs to the chorismate synthase family. Homotetramer. It depends on FMNH2 as a cofactor.

The enzyme catalyses 5-O-(1-carboxyvinyl)-3-phosphoshikimate = chorismate + phosphate. It functions in the pathway metabolic intermediate biosynthesis; chorismate biosynthesis; chorismate from D-erythrose 4-phosphate and phosphoenolpyruvate: step 7/7. In terms of biological role, catalyzes the anti-1,4-elimination of the C-3 phosphate and the C-6 proR hydrogen from 5-enolpyruvylshikimate-3-phosphate (EPSP) to yield chorismate, which is the branch point compound that serves as the starting substrate for the three terminal pathways of aromatic amino acid biosynthesis. This reaction introduces a second double bond into the aromatic ring system. The sequence is that of Chorismate synthase from Chlamydia trachomatis serovar L2 (strain ATCC VR-902B / DSM 19102 / 434/Bu).